Here is a 398-residue protein sequence, read N- to C-terminus: Substance-K receptor (398 aa).

Topologically, residues 1 to 32 (MGTCDIVTEANISSGPESNTTGITAFSMPSWQ) are extracellular. N11 and N19 each carry an N-linked (GlcNAc...) asparagine glycan. The helical transmembrane segment at 33–56 (LALWATAYLALVLVAVTGNAIVIW) threads the bilayer. Topologically, residues 57-69 (IILAHRRMRTVTN) are cytoplasmic. The helical transmembrane segment at 70 to 90 (YFIVNLALADLCMAAFNAAFN) threads the bilayer. Residues 91 to 107 (FVYASHNIWYFGRAFCY) are Extracellular-facing. C106 and C181 are joined by a disulfide. The chain crosses the membrane as a helical span at residues 108–129 (FQNLFPITAMFVSIYSMTAIAA). At 130-149 (DRYMAIVHPFQPRLSAPSTK) the chain is on the cytoplasmic side. Residues 150 to 170 (AVIAGIWLVALALASPQCFYS) form a helical membrane-spanning segment. Over 171-196 (TVTMDQGATKCVVAWPEDSGGKTLLL) the chain is Extracellular. A helical membrane pass occupies residues 197-218 (YHLVVIALIYFLPLAVMFVAYS). Residues 219-251 (VIGLTLWRRAVPGHQAHGANLRHLQAMKKFVKT) are Cytoplasmic-facing. Residues 252–272 (MVLVVLTFAICWLPYHLYFIL) traverse the membrane as a helical segment. Topologically, residues 273 to 290 (GSFQEDIYCHKFIQQVYL) are extracellular. A helical transmembrane segment spans residues 291 to 310 (ALFWLAMSSTMYNPIIYCCL). The Cytoplasmic portion of the chain corresponds to 311–398 (NHRFRSGFRL…LAPTKTHVEI (88 aa)). C324 carries S-palmitoyl cysteine lipidation.

This sequence belongs to the G-protein coupled receptor 1 family.

Its subcellular location is the cell membrane. Functionally, this is a receptor for the tachykinin neuropeptide substance K (neurokinin A). It is associated with G proteins that activate a phosphatidylinositol-calcium second messenger system. The rank order of affinity of this receptor to tachykinins is: substance K &gt; neuromedin-K &gt; substance P. The protein is Substance-K receptor (TACR2) of Homo sapiens (Human).